A 530-amino-acid polypeptide reads, in one-letter code: Type 2 DNA topoisomerase 6 subunit B (530 aa).

ATP-binding positions include Asn42, Asp76, 97–98, 106–113, and Lys427; these read SK and GMYGLGVK.

This sequence belongs to the TOP6B family. Homodimer. Heterotetramer of two Top6A and two Top6B chains.

It carries out the reaction ATP-dependent breakage, passage and rejoining of double-stranded DNA.. Functionally, relaxes both positive and negative superturns and exhibits a strong decatenase activity. This is Type 2 DNA topoisomerase 6 subunit B from Saccharolobus islandicus (strain M.16.4 / Kamchatka #3) (Sulfolobus islandicus).